The following is a 173-amino-acid chain: Alpha-crystallin A chain (173 aa).

Met1 bears the N-acetylmethionine mark. Positions 1-63 are required for complex formation with BFSP1 and BFSP2; the sequence is MDIAIQHPWF…RTVLDSGISE (63 aa). Deamidated glutamine; partial is present on Gln6. N-linked (Glc) (glycation) lysine glycosylation is present at Lys11. Residue Ser45 is modified to Phosphoserine. Gln50 is subject to Deamidated glutamine; partial. The region spanning 52–162 is the sHSP domain; it reads LFRTVLDSGI…GHSERAIPVS (111 aa). The residue at position 70 (Lys70) is an N6-acetyllysine. An N-linked (Glc) (glycation) lysine glycan is attached at Lys78. Residue Gln90 is modified to Deamidated glutamine; partial. The residue at position 99 (Lys99) is an N6-acetyllysine. Residue His100 coordinates Zn(2+). Asn101 bears the Deamidated asparagine; partial mark. Residues Glu102 and His107 each contribute to the Zn(2+) site. Ser122 is subject to Phosphoserine. Asn123 carries the deamidated asparagine; partial modification. The tract at residues 144–173 is disordered; that stretch reads PKIPSGVDAGHSERAIPVSREEKPSSAPSS. The segment covering 153 to 167 has biased composition (basic and acidic residues); sequence GHSERAIPVSREEKP. His154 provides a ligand contact to Zn(2+). The tract at residues 157 to 163 is important for oligomerization; sequence RAIPVSR. A glycan (O-linked (GlcNAc) serine) is linked at Ser162.

Belongs to the small heat shock protein (HSP20) family. As to quaternary structure, heteromer composed of three CRYAA and one CRYAB subunits. Inter-subunit bridging via zinc ions enhances stability, which is crucial as there is no protein turn over in the lens. Can also form homodimers and homotetramers (dimers of dimers) which serve as the building blocks of homooligomers. Within homooligomers, the zinc-binding motif is created from residues of 3 different molecules. His-100 and Glu-102 from one molecule are ligands of the zinc ion, and His-107 and His-154 residues from additional molecules complete the site with tetrahedral coordination geometry. Part of a complex required for lens intermediate filament formation composed of BFSP1, BFSP2 and CRYAA. Post-translationally, acetylation at Lys-70 may increase chaperone activity. In terms of processing, undergoes age-dependent proteolytical cleavage at the C-terminus.

It is found in the cytoplasm. Its subcellular location is the nucleus. Functionally, contributes to the transparency and refractive index of the lens. Acts as a chaperone, preventing aggregation of various proteins under a wide range of stress conditions. Required for the correct formation of lens intermediate filaments as part of a complex composed of BFSP1, BFSP2 and CRYAA. The chain is Alpha-crystallin A chain (CRYAA) from Bos taurus (Bovine).